Consider the following 359-residue polypeptide: 3-dehydroquinate synthase (359 aa).

NAD(+) contacts are provided by residues 71–76, 105–109, 129–130, lysine 142, lysine 151, and 169–172; these read DGEQFK, GVIGD, TT, and CLHT. Zn(2+)-binding residues include glutamate 184, histidine 247, and histidine 264.

It belongs to the sugar phosphate cyclases superfamily. Dehydroquinate synthase family. The cofactor is Co(2+). Zn(2+) is required as a cofactor. NAD(+) serves as cofactor.

It localises to the cytoplasm. It carries out the reaction 7-phospho-2-dehydro-3-deoxy-D-arabino-heptonate = 3-dehydroquinate + phosphate. It participates in metabolic intermediate biosynthesis; chorismate biosynthesis; chorismate from D-erythrose 4-phosphate and phosphoenolpyruvate: step 2/7. Catalyzes the conversion of 3-deoxy-D-arabino-heptulosonate 7-phosphate (DAHP) to dehydroquinate (DHQ). The chain is 3-dehydroquinate synthase from Shewanella putrefaciens (strain CN-32 / ATCC BAA-453).